A 270-amino-acid chain; its full sequence is 3-methyl-2-oxobutanoate hydroxymethyltransferase (270 aa).

Positions 42 and 86 each coordinate Mg(2+). Residues 42-43, Asp-86, and Lys-116 each bind 3-methyl-2-oxobutanoate; that span reads DS. Glu-118 is a Mg(2+) binding site. Catalysis depends on Glu-185, which acts as the Proton acceptor.

This sequence belongs to the PanB family. Homodecamer; pentamer of dimers. The cofactor is Mg(2+).

Its subcellular location is the cytoplasm. The enzyme catalyses 3-methyl-2-oxobutanoate + (6R)-5,10-methylene-5,6,7,8-tetrahydrofolate + H2O = 2-dehydropantoate + (6S)-5,6,7,8-tetrahydrofolate. Its pathway is cofactor biosynthesis; (R)-pantothenate biosynthesis; (R)-pantoate from 3-methyl-2-oxobutanoate: step 1/2. Functionally, catalyzes the reversible reaction in which hydroxymethyl group from 5,10-methylenetetrahydrofolate is transferred onto alpha-ketoisovalerate to form ketopantoate. The chain is 3-methyl-2-oxobutanoate hydroxymethyltransferase from Synechococcus sp. (strain CC9902).